The chain runs to 901 residues: Core protein VP3 (901 aa).

The protein belongs to the orbivirus VP3 family.

It localises to the virion. The VP3 protein is one of the five proteins (with VP1, VP4, VP6 and VP7) which form the inner capsid of the virus. The chain is Core protein VP3 (Segment-3) from Antilocapra americana (Pronghorn).